The sequence spans 438 residues: MSTQLRNNPMKVALASMVGTAIEFFDYYIYAAAAVLVFNTQFFHSDDPLSNDLLSLSTLALAFFARPIGSALFGHFGDKIGRKKTLVASLVLMGGSTVVIGLLPNYAQIGIWAPILLCVCRVGQGIGLGGEWGGAALVATENAPEGKRAWYGTFPQLGAPIGLFVANGTFFLVSYLLGHNALVEWAWRIPFVSSILLVAVGLYVRLTLHESHVFVEAEQKGKKLNAPVSVVFTKHLKPMVIGTFIMVATYSLFYIMTAFAQAYSRTAPKLSEAGYALGLGIPANTFTGLLLISAIVFGIFISISGFYADKIGRRKWLIWVTIAIGVLGLAMPLFLENGTPVSVFAFLVIGMAIMGMTFGPMAALLPELFPTEVRYSGASLAYNLASIIGATIAAMISLKINASFGVMGVGIYLAINALMTFLALLASKETKNVDLTEI.

The Cytoplasmic segment spans residues 1–17; sequence MSTQLRNNPMKVALASM. The helical transmembrane segment at 18–38 threads the bilayer; sequence VGTAIEFFDYYIYAAAAVLVF. The Periplasmic segment spans residues 39 to 52; it reads NTQFFHSDDPLSND. The helical transmembrane segment at 53-73 threads the bilayer; the sequence is LLSLSTLALAFFARPIGSALF. The Cytoplasmic portion of the chain corresponds to 74-85; the sequence is GHFGDKIGRKKT. A helical membrane pass occupies residues 86-106; sequence LVASLVLMGGSTVVIGLLPNY. The Periplasmic portion of the chain corresponds to 107 to 115; that stretch reads AQIGIWAPI. A helical membrane pass occupies residues 116 to 136; sequence LLCVCRVGQGIGLGGEWGGAA. The Cytoplasmic segment spans residues 137 to 156; the sequence is LVATENAPEGKRAWYGTFPQ. The chain crosses the membrane as a helical span at residues 157 to 177; sequence LGAPIGLFVANGTFFLVSYLL. The Periplasmic portion of the chain corresponds to 178–181; that stretch reads GHNA. Residues 182-202 form a helical membrane-spanning segment; sequence LVEWAWRIPFVSSILLVAVGL. The Cytoplasmic portion of the chain corresponds to 203–239; the sequence is YVRLTLHESHVFVEAEQKGKKLNAPVSVVFTKHLKPM. Residues 240 to 260 traverse the membrane as a helical segment; sequence VIGTFIMVATYSLFYIMTAFA. Residues 261 to 286 are Periplasmic-facing; sequence QAYSRTAPKLSEAGYALGLGIPANTF. Residues 287 to 307 form a helical membrane-spanning segment; that stretch reads TGLLLISAIVFGIFISISGFY. Topologically, residues 308-314 are cytoplasmic; it reads ADKIGRR. Residues 315 to 336 form a helical membrane-spanning segment; the sequence is KWLIWVTIAIGVLGLAMPLFLE. Topologically, residues 337–342 are periplasmic; sequence NGTPVS. The chain crosses the membrane as a helical span at residues 343-363; sequence VFAFLVIGMAIMGMTFGPMAA. At 364–377 the chain is on the cytoplasmic side; it reads LLPELFPTEVRYSG. The helical transmembrane segment at 378-398 threads the bilayer; it reads ASLAYNLASIIGATIAAMISL. The Periplasmic portion of the chain corresponds to 399-405; it reads KINASFG. A helical membrane pass occupies residues 406 to 426; it reads VMGVGIYLAINALMTFLALLA. The Cytoplasmic portion of the chain corresponds to 427-438; it reads SKETKNVDLTEI.

The protein belongs to the major facilitator superfamily. Sugar transporter (TC 2.A.1.1) family.

It localises to the cell inner membrane. The chain is Putative metabolite transport protein HI_0281 from Haemophilus influenzae (strain ATCC 51907 / DSM 11121 / KW20 / Rd).